A 314-amino-acid polypeptide reads, in one-letter code: MPVKIPDDLPAAEILESENIFVMSETRAANQDIRPMKVLILNLMPNKIETETQLLRLLGNTPLQVDVDLLRIHDKESRHTSIDHMNNFYRDFEAVRHKNYDGLIITGAPLGQVEFEDVSYWDHIREIIDWSQQHVTSVLFLCWAAHAALFHLYGLNRKLLKEKRSGVFLHKRTHRHVPLLRGFDDEFLAPHSRFAEMDVQLLKAHPALQVLTESDEAGAYMVLSTNNRNLFVMGHPEYQKSTLKDEYFRDLGAGLQPEIPQNYFRHNDPGQDPVARWYGHGSLLISNWLNYYVYQLTPYNLDDMSGITPWENEV.

Cysteine 142 serves as the catalytic Acyl-thioester intermediate. Positions 163 and 192 each coordinate substrate. The active-site Proton acceptor is histidine 235. Residue glutamate 237 is part of the active site. Substrate is bound at residue arginine 249.

This sequence belongs to the MetA family.

Its subcellular location is the cytoplasm. It carries out the reaction L-homoserine + succinyl-CoA = O-succinyl-L-homoserine + CoA. It functions in the pathway amino-acid biosynthesis; L-methionine biosynthesis via de novo pathway; O-succinyl-L-homoserine from L-homoserine: step 1/1. Functionally, transfers a succinyl group from succinyl-CoA to L-homoserine, forming succinyl-L-homoserine. The chain is Homoserine O-succinyltransferase from Shewanella sediminis (strain HAW-EB3).